Here is a 268-residue protein sequence, read N- to C-terminus: Tryptophan synthase alpha chain (268 aa).

Active-site proton acceptor residues include E49 and D60.

It belongs to the TrpA family. Tetramer of two alpha and two beta chains.

The catalysed reaction is (1S,2R)-1-C-(indol-3-yl)glycerol 3-phosphate + L-serine = D-glyceraldehyde 3-phosphate + L-tryptophan + H2O. Its pathway is amino-acid biosynthesis; L-tryptophan biosynthesis; L-tryptophan from chorismate: step 5/5. The alpha subunit is responsible for the aldol cleavage of indoleglycerol phosphate to indole and glyceraldehyde 3-phosphate. This is Tryptophan synthase alpha chain from Escherichia coli O139:H28 (strain E24377A / ETEC).